The chain runs to 225 residues: Uridylate kinase (225 aa).

9–10 (GS) contributes to the ATP binding site. Glycine 44 is a binding site for UMP. ATP is bound by residues glycine 45 and arginine 49. UMP is bound by residues aspartate 66 and 114–120 (THPGHTT). Threonine 140, asparagine 141, tyrosine 146, and aspartate 149 together coordinate ATP.

Belongs to the UMP kinase family. In terms of assembly, homohexamer.

The protein resides in the cytoplasm. The enzyme catalyses UMP + ATP = UDP + ADP. Its pathway is pyrimidine metabolism; CTP biosynthesis via de novo pathway; UDP from UMP (UMPK route): step 1/1. With respect to regulation, inhibited by UTP. Its function is as follows. Catalyzes the reversible phosphorylation of UMP to UDP. The protein is Uridylate kinase of Thermococcus gammatolerans (strain DSM 15229 / JCM 11827 / EJ3).